A 143-amino-acid polypeptide reads, in one-letter code: Sec-independent protein translocase protein TatB (143 aa).

The helical transmembrane segment at 2–22 (FGNIGWGEFMVLLVAALVILG) threads the bilayer. The disordered stretch occupies residues 97-143 (FDKPGSVSFDKSNPGTKAVSADPSTPTAPQNKPLAAGERPPIDLDAT).

It belongs to the TatB family. As to quaternary structure, the Tat system comprises two distinct complexes: a TatABC complex, containing multiple copies of TatA, TatB and TatC subunits, and a separate TatA complex, containing only TatA subunits. Substrates initially bind to the TatABC complex, which probably triggers association of the separate TatA complex to form the active translocon.

The protein localises to the cell membrane. Functionally, part of the twin-arginine translocation (Tat) system that transports large folded proteins containing a characteristic twin-arginine motif in their signal peptide across membranes. Together with TatC, TatB is part of a receptor directly interacting with Tat signal peptides. TatB may form an oligomeric binding site that transiently accommodates folded Tat precursor proteins before their translocation. This is Sec-independent protein translocase protein TatB from Rhodococcus opacus (strain B4).